Here is a 291-residue protein sequence, read N- to C-terminus: Transcription factor TYE7 (291 aa).

The segment at 89–109 is disordered; it reads FPTDQFFSNPSSYSHSPEVSS. Residues 96–109 show a composition bias toward low complexity; sequence SNPSSYSHSPEVSS. Ser-104 carries the post-translational modification Phosphoserine. One can recognise a bHLH domain in the interval 180–265; the sequence is FQKQAHNKIE…EKAVDYILYL (86 aa). Residues His-185, Glu-189, and Arg-193 each coordinate DNA. The tract at residues 221–245 is disordered; sequence DSVKKQDEDGAETAATTPLPSAAAT. Positions 233–245 are enriched in low complexity; the sequence is TAATTPLPSAAAT. Thr-237 bears the Phosphothreonine mark.

As to quaternary structure, homodimer. Efficient DNA binding requires dimerization with another bHLH protein.

Its subcellular location is the nucleus. Transcriptional activator of glycolytic gene expression, such as enolase genes (ENO1 and ENO2), glyceraldehyde-3-phosphate dehydrogenase gene (TDH), phosphoglycerate kinase (PGK1), phosphoglycerate mutase (PGM1), pyruvate kinase (PYK1) and triosephosphate isomerase (TPI1) genes. Binds DNA on E-box motifs: 5'-CANNTG-3'. In response to adenylic nucleotide reduction, activates Ty1 mRNA transcription, possibly by controlling Ty1 antisense transcription. Acts as a cell cycle transcription factor. Its function may also be linked to sulfur metabolism and the cross-regulation between phosphate and sulfate metabolism. In Saccharomyces cerevisiae (strain ATCC 204508 / S288c) (Baker's yeast), this protein is Transcription factor TYE7.